We begin with the raw amino-acid sequence, 253 residues long: Cyclin-C1-1 (253 aa).

It belongs to the cyclin family. Cyclin C subfamily.

This is Cyclin-C1-1 (CYCC1-1) from Arabidopsis thaliana (Mouse-ear cress).